The following is a 256-amino-acid chain: 5-keto-4-deoxy-D-glucarate aldolase (256 aa).

Catalysis depends on His-50, which acts as the Proton acceptor. Gln-151 is a substrate binding site. Glu-153 lines the Mg(2+) pocket. Residues Ser-178 and Asp-179 each coordinate substrate. Asp-179 lines the Mg(2+) pocket.

It belongs to the HpcH/HpaI aldolase family. KDGluc aldolase subfamily. In terms of assembly, homohexamer; trimer of dimers. Mg(2+) serves as cofactor.

It carries out the reaction 5-dehydro-4-deoxy-D-glucarate = 2-hydroxy-3-oxopropanoate + pyruvate. The catalysed reaction is 2-dehydro-3-deoxy-D-glucarate = 2-hydroxy-3-oxopropanoate + pyruvate. The protein operates within carbohydrate acid metabolism; galactarate degradation; D-glycerate from galactarate: step 2/3. Its function is as follows. Catalyzes the reversible retro-aldol cleavage of both 5-keto-4-deoxy-D-glucarate and 2-keto-3-deoxy-D-glucarate to pyruvate and tartronic semialdehyde. In Escherichia coli (strain K12 / DH10B), this protein is 5-keto-4-deoxy-D-glucarate aldolase.